The following is a 149-amino-acid chain: Small ribosomal subunit protein uS9 (149 aa).

The protein belongs to the universal ribosomal protein uS9 family.

The protein resides in the cytoplasm. This chain is Small ribosomal subunit protein uS9 (RPS16A), found in Oryza sativa subsp. indica (Rice).